A 481-amino-acid chain; its full sequence is Aspartyl/glutamyl-tRNA(Asn/Gln) amidotransferase subunit B (481 aa).

It belongs to the GatB/GatE family. GatB subfamily. As to quaternary structure, heterotrimer of A, B and C subunits.

It catalyses the reaction L-glutamyl-tRNA(Gln) + L-glutamine + ATP + H2O = L-glutaminyl-tRNA(Gln) + L-glutamate + ADP + phosphate + H(+). The enzyme catalyses L-aspartyl-tRNA(Asn) + L-glutamine + ATP + H2O = L-asparaginyl-tRNA(Asn) + L-glutamate + ADP + phosphate + 2 H(+). Functionally, allows the formation of correctly charged Asn-tRNA(Asn) or Gln-tRNA(Gln) through the transamidation of misacylated Asp-tRNA(Asn) or Glu-tRNA(Gln) in organisms which lack either or both of asparaginyl-tRNA or glutaminyl-tRNA synthetases. The reaction takes place in the presence of glutamine and ATP through an activated phospho-Asp-tRNA(Asn) or phospho-Glu-tRNA(Gln). In Pseudomonas savastanoi pv. phaseolicola (strain 1448A / Race 6) (Pseudomonas syringae pv. phaseolicola (strain 1448A / Race 6)), this protein is Aspartyl/glutamyl-tRNA(Asn/Gln) amidotransferase subunit B.